The following is a 373-amino-acid chain: Polygalacturonase (373 aa).

Residues Met1–Arg24 form the signal peptide. An intrachain disulfide couples Cys27 to Cys42. Residues Asn65 and Asn94 are each glycosylated (N-linked (GlcNAc...) asparagine). PbH1 repeat units follow at residues Thr136–Gly158, Ser159–Ser197, Ser198–Ser219, Gly220–Ser240, Val249–Ser270, Ile278–Gln300, Thr312–Ala333, and Cys345–Asn369. The Proton donor role is filled by Asp212. Cys214 and Cys230 form a disulfide bridge. Residue His234 is part of the active site. N-linked (GlcNAc...) asparagine glycosylation is found at Asn280 and Asn290. 2 disulfides stabilise this stretch: Cys340–Cys345 and Cys364–Cys371.

It belongs to the glycosyl hydrolase 28 family.

It is found in the secreted. The enzyme catalyses (1,4-alpha-D-galacturonosyl)n+m + H2O = (1,4-alpha-D-galacturonosyl)n + (1,4-alpha-D-galacturonosyl)m.. Functionally, involved in maceration and soft-rotting of plant tissue. Hydrolyzes the 1,4-alpha glycosidic bonds of de-esterified pectate in the smooth region of the plant cell wall. This is Polygalacturonase (PGA) from Fusarium fujikuroi (Bakanae and foot rot disease fungus).